The following is a 165-amino-acid chain: Shikimate kinase (165 aa).

11–16 (GAGKTT) lines the ATP pocket. T15 serves as a coordination point for Mg(2+). Substrate is bound by residues D33, R57, and G78. R116 provides a ligand contact to ATP. Substrate is bound at residue R134.

The protein belongs to the shikimate kinase family. Monomer. Mg(2+) serves as cofactor.

It localises to the cytoplasm. The enzyme catalyses shikimate + ATP = 3-phosphoshikimate + ADP + H(+). It participates in metabolic intermediate biosynthesis; chorismate biosynthesis; chorismate from D-erythrose 4-phosphate and phosphoenolpyruvate: step 5/7. Catalyzes the specific phosphorylation of the 3-hydroxyl group of shikimic acid using ATP as a cosubstrate. The protein is Shikimate kinase of Bacillus cereus (strain G9842).